A 453-amino-acid chain; its full sequence is Bifunctional protein GlmU (453 aa).

Positions 1-225 (MNIVILAAGT…EWETLGVNSK (225 aa)) are pyrophosphorylase. UDP-N-acetyl-alpha-D-glucosamine-binding positions include 6 to 9 (LAAG), lysine 20, glutamine 71, 76 to 77 (GT), 98 to 100 (YGD), glycine 135, glutamate 150, asparagine 165, and asparagine 223. Mg(2+) is bound at residue aspartate 100. Asparagine 223 is a Mg(2+) binding site. Residues 226-246 (AQLAELERIHQRNVADALLVD) form a linker region. Positions 247 to 453 (GVTLADPARV…GYVRPVKKKS (207 aa)) are N-acetyltransferase. UDP-N-acetyl-alpha-D-glucosamine-binding residues include arginine 329 and lysine 347. Histidine 359 acts as the Proton acceptor in catalysis. The UDP-N-acetyl-alpha-D-glucosamine site is built by tyrosine 362 and asparagine 373. Acetyl-CoA is bound by residues alanine 376, 382–383 (NY), serine 401, and alanine 419.

This sequence in the N-terminal section; belongs to the N-acetylglucosamine-1-phosphate uridyltransferase family. The protein in the C-terminal section; belongs to the transferase hexapeptide repeat family. Homotrimer. Requires Mg(2+) as cofactor.

It localises to the cytoplasm. It catalyses the reaction alpha-D-glucosamine 1-phosphate + acetyl-CoA = N-acetyl-alpha-D-glucosamine 1-phosphate + CoA + H(+). The catalysed reaction is N-acetyl-alpha-D-glucosamine 1-phosphate + UTP + H(+) = UDP-N-acetyl-alpha-D-glucosamine + diphosphate. It functions in the pathway nucleotide-sugar biosynthesis; UDP-N-acetyl-alpha-D-glucosamine biosynthesis; N-acetyl-alpha-D-glucosamine 1-phosphate from alpha-D-glucosamine 6-phosphate (route II): step 2/2. It participates in nucleotide-sugar biosynthesis; UDP-N-acetyl-alpha-D-glucosamine biosynthesis; UDP-N-acetyl-alpha-D-glucosamine from N-acetyl-alpha-D-glucosamine 1-phosphate: step 1/1. The protein operates within bacterial outer membrane biogenesis; LPS lipid A biosynthesis. Catalyzes the last two sequential reactions in the de novo biosynthetic pathway for UDP-N-acetylglucosamine (UDP-GlcNAc). The C-terminal domain catalyzes the transfer of acetyl group from acetyl coenzyme A to glucosamine-1-phosphate (GlcN-1-P) to produce N-acetylglucosamine-1-phosphate (GlcNAc-1-P), which is converted into UDP-GlcNAc by the transfer of uridine 5-monophosphate (from uridine 5-triphosphate), a reaction catalyzed by the N-terminal domain. In Burkholderia ambifaria (strain ATCC BAA-244 / DSM 16087 / CCUG 44356 / LMG 19182 / AMMD) (Burkholderia cepacia (strain AMMD)), this protein is Bifunctional protein GlmU.